Here is a 189-residue protein sequence, read N- to C-terminus: Small ribosomal subunit protein uS5 (189 aa).

An S5 DRBM domain is found at 27–90 (FEERLLEAAR…EDAKKKTIRV (64 aa)).

The protein belongs to the universal ribosomal protein uS5 family. As to quaternary structure, part of the 30S ribosomal subunit. Contacts proteins S4 and S8.

With S4 and S12 plays an important role in translational accuracy. Functionally, located at the back of the 30S subunit body where it stabilizes the conformation of the head with respect to the body. This Hydrogenobaculum sp. (strain Y04AAS1) protein is Small ribosomal subunit protein uS5.